Consider the following 484-residue polypeptide: Chromosomal replication initiator protein DnaA (484 aa).

The domain I, interacts with DnaA modulators stretch occupies residues 1-74 (MEKSKNIWSL…ILTKNGYNNV (74 aa)). The tract at residues 74 to 139 (VTIVFTNQPP…EEEPTNFKNP (66 aa)) is domain II. The segment at 140–356 (FLKKRYTFEN…AAVTKLKAYI (217 aa)) is domain III, AAA+ region. ATP contacts are provided by G184, G186, K187, and T188. A domain IV, binds dsDNA region spans residues 357–484 (DLDNIEIDID…TELMNKIKKN (128 aa)).

This sequence belongs to the DnaA family. Oligomerizes as a right-handed, spiral filament on DNA at oriC.

It localises to the cytoplasm. Its function is as follows. Plays an essential role in the initiation and regulation of chromosomal replication. ATP-DnaA binds to the origin of replication (oriC) to initiate formation of the DNA replication initiation complex once per cell cycle. Binds the DnaA box (a 9 base pair repeat at the origin) and separates the double-stranded (ds)DNA. Forms a right-handed helical filament on oriC DNA; dsDNA binds to the exterior of the filament while single-stranded (ss)DNA is stabiized in the filament's interior. The ATP-DnaA-oriC complex binds and stabilizes one strand of the AT-rich DNA unwinding element (DUE), permitting loading of DNA polymerase. After initiation quickly degrades to an ADP-DnaA complex that is not apt for DNA replication. Binds acidic phospholipids. The protein is Chromosomal replication initiator protein DnaA of Borrelia garinii subsp. bavariensis (strain ATCC BAA-2496 / DSM 23469 / PBi) (Borreliella bavariensis).